We begin with the raw amino-acid sequence, 355 residues long: MKLNVNLPHHPYDIVIENGALSQVGSWLSQLWQPQKLVVITDNRVARLYAEKVKLSLEAAGFKVFTFDFLEGEASKNLTTVNKAYEFLAKVGLTRSDGIVALGGGVVGDLAGFVASTYMRGIHFVQIPTSLTAQVDSSIGGKTGVNTPWAKNMVGTFTQPDGVLIDPEVLHTLGQRELIEGMGEVVKYGLIEDKELWDELSEMDGSPESILEHAESIIYHSCDVKRKIVIEDELDNGVRLYLNFGHTIGHAIEATAGYGQVMHGEAVAIGMVQVSRVAEKQGLMPAGITEDIIHMCQKFGLPVDYQPWNENALYQALTHDKKARGNSIKLVLVPELGSANIHQIPLEEMKEFLKK.

NAD(+) is bound by residues 71–76 (EGEASK), 105–109 (GVVGD), 129–130 (TS), lysine 142, and lysine 151. 3 residues coordinate Zn(2+): glutamate 184, histidine 246, and histidine 263.

The protein belongs to the sugar phosphate cyclases superfamily. Dehydroquinate synthase family. It depends on Co(2+) as a cofactor. Zn(2+) is required as a cofactor. NAD(+) serves as cofactor.

The protein resides in the cytoplasm. The enzyme catalyses 7-phospho-2-dehydro-3-deoxy-D-arabino-heptonate = 3-dehydroquinate + phosphate. It functions in the pathway metabolic intermediate biosynthesis; chorismate biosynthesis; chorismate from D-erythrose 4-phosphate and phosphoenolpyruvate: step 2/7. Catalyzes the conversion of 3-deoxy-D-arabino-heptulosonate 7-phosphate (DAHP) to dehydroquinate (DHQ). This is 3-dehydroquinate synthase from Streptococcus gordonii (strain Challis / ATCC 35105 / BCRC 15272 / CH1 / DL1 / V288).